The primary structure comprises 287 residues: Inositol diphosphatase siw14 (287 aa).

A Tyrosine-protein phosphatase domain is found at 85 to 256 (NFGVVYPGII…LNDLKRYISD (172 aa)). Residues Ser-156 and Ser-159 each carry the phosphoserine modification. Cys-189 serves as the catalytic Phosphocysteine intermediate.

The protein belongs to the protein-tyrosine phosphatase family. Atypical dual-specificity phosphatase Siw14-like subfamily.

Its subcellular location is the cytoplasm. The protein resides in the nucleus. The enzyme catalyses 5-diphospho-1D-myo-inositol 1,2,3,4,6-pentakisphosphate + H2O = 1D-myo-inositol hexakisphosphate + phosphate + H(+). It catalyses the reaction 1-diphospho-1D-myo-inositol 2,3,4,5,6-pentakisphosphate + H2O = 1D-myo-inositol hexakisphosphate + phosphate + H(+). The catalysed reaction is 1,5-bis(diphospho)-1D-myo-inositol 2,3,4,6-tetrakisphosphate + H2O = 1-diphospho-1D-myo-inositol 2,3,4,5,6-pentakisphosphate + phosphate + 2 H(+). Activity is inhibited by the reaction product inorganic phosphate and by sulfate (a phosphate mimetic). Not inhibited by magnesium. Its function is as follows. Cleaves the beta-phosphate at the 1- and 5-position of soluble inositol pyrophosphates. Has exopolyphosphatase activity in vitro but does not appear to contribute to the homeostasis of cellular polyphosphate. The polypeptide is Inositol diphosphatase siw14 (Schizosaccharomyces pombe (strain 972 / ATCC 24843) (Fission yeast)).